We begin with the raw amino-acid sequence, 271 residues long: ATP synthase subunit delta (271 aa).

Belongs to the ATPase delta chain family. F-type ATPases have 2 components, F(1) - the catalytic core - and F(0) - the membrane proton channel. F(1) has five subunits: alpha(3), beta(3), gamma(1), delta(1), epsilon(1). F(0) has three main subunits: a(1), b(2) and c(10-14). The alpha and beta chains form an alternating ring which encloses part of the gamma chain. F(1) is attached to F(0) by a central stalk formed by the gamma and epsilon chains, while a peripheral stalk is formed by the delta and b chains.

Its subcellular location is the cell membrane. In terms of biological role, f(1)F(0) ATP synthase produces ATP from ADP in the presence of a proton or sodium gradient. F-type ATPases consist of two structural domains, F(1) containing the extramembraneous catalytic core and F(0) containing the membrane proton channel, linked together by a central stalk and a peripheral stalk. During catalysis, ATP synthesis in the catalytic domain of F(1) is coupled via a rotary mechanism of the central stalk subunits to proton translocation. Its function is as follows. This protein is part of the stalk that links CF(0) to CF(1). It either transmits conformational changes from CF(0) to CF(1) or is implicated in proton conduction. The protein is ATP synthase subunit delta of Corynebacterium glutamicum (strain R).